Reading from the N-terminus, the 223-residue chain is Glutathione S-transferase alpha I (223 aa).

N-acetylmethionine is present on Met-1. Position 2 is an N-acetylalanine; in Glutathione S-transferase alpha I, N-terminally processed (Ala-2). The region spanning 3–83 is the GST N-terminal domain; that stretch reads RKPLLHYFNG…YVANKHNLYG (81 aa). Lys-4 carries the post-translational modification N6-succinyllysine. Residues Tyr-9, Arg-45, 54-55, and 67-68 contribute to the glutathione site; these read QV and QT. Residues 85–208 form the GST C-terminal domain; that stretch reads DMKERALIDM…QPGSQRKPPM (124 aa).

It belongs to the GST superfamily. Alpha family. In terms of assembly, homodimer or heterodimer of GSTA1 and GSTA2. In terms of tissue distribution, liver and lung.

Its subcellular location is the cytoplasm. The catalysed reaction is RX + glutathione = an S-substituted glutathione + a halide anion + H(+). The enzyme catalyses prostaglandin A2 + glutathione = prostaglandin A2-S-(R)-glutathione. It catalyses the reaction prostaglandin J2 + glutathione = prostaglandin J2-S-(R)-glutathione. It carries out the reaction (13S)-hydroperoxy-(9Z,11E)-octadecadienoate + 2 glutathione = (13S)-hydroxy-(9Z,11E)-octadecadienoate + glutathione disulfide + H2O. The catalysed reaction is androst-5-ene-3,17-dione = androst-4-ene-3,17-dione. In terms of biological role, glutathione S-transferase that catalyzes the nucleophilic attack of the sulfur atom of glutathione on the electrophilic groups of a wide range of exogenous and endogenous compounds. Involved in the formation of glutathione conjugates of both prostaglandin A2 (PGA2) and prostaglandin J2 (PGJ2). It also catalyzes the isomerization of D5-androstene-3,17-dione (AD) into D4-androstene-3,17-dione and may therefore play an important role in hormone biosynthesis. Through its glutathione-dependent peroxidase activity toward the fatty acid hydroperoxide (13S)-hydroperoxy-(9Z,11E)-octadecadienoate/13-HPODE it is also involved in the metabolism of oxidized linoleic acid. This Oryctolagus cuniculus (Rabbit) protein is Glutathione S-transferase alpha I.